Consider the following 333-residue polypeptide: Glycerol-3-phosphate dehydrogenase [NAD(P)+] (333 aa).

The NADPH site is built by Ser-10, Trp-11, and Lys-105. 3 residues coordinate sn-glycerol 3-phosphate: Lys-105, Gly-136, and Thr-138. An NADPH-binding site is contributed by Ala-140. Sn-glycerol 3-phosphate is bound by residues Lys-191, Asp-244, Ser-254, Arg-255, and Asn-256. Lys-191 (proton acceptor) is an active-site residue. Residue Arg-255 coordinates NADPH. 2 residues coordinate NADPH: Val-279 and Glu-281.

It belongs to the NAD-dependent glycerol-3-phosphate dehydrogenase family.

The protein localises to the cytoplasm. It carries out the reaction sn-glycerol 3-phosphate + NAD(+) = dihydroxyacetone phosphate + NADH + H(+). The catalysed reaction is sn-glycerol 3-phosphate + NADP(+) = dihydroxyacetone phosphate + NADPH + H(+). It functions in the pathway membrane lipid metabolism; glycerophospholipid metabolism. Catalyzes the reduction of the glycolytic intermediate dihydroxyacetone phosphate (DHAP) to sn-glycerol 3-phosphate (G3P), the key precursor for phospholipid synthesis. This chain is Glycerol-3-phosphate dehydrogenase [NAD(P)+], found in Trichlorobacter lovleyi (strain ATCC BAA-1151 / DSM 17278 / SZ) (Geobacter lovleyi).